Consider the following 311-residue polypeptide: 4-hydroxy-3-methylbut-2-enyl diphosphate reductase (311 aa).

Cysteine 14 contributes to the [4Fe-4S] cluster binding site. 2 residues coordinate (2E)-4-hydroxy-3-methylbut-2-enyl diphosphate: histidine 43 and histidine 76. Residues histidine 43 and histidine 76 each coordinate dimethylallyl diphosphate. Residues histidine 43 and histidine 76 each contribute to the isopentenyl diphosphate site. Cysteine 98 is a binding site for [4Fe-4S] cluster. Histidine 126 contacts (2E)-4-hydroxy-3-methylbut-2-enyl diphosphate. Histidine 126 contributes to the dimethylallyl diphosphate binding site. Histidine 126 contacts isopentenyl diphosphate. Glutamate 128 acts as the Proton donor in catalysis. Threonine 166 lines the (2E)-4-hydroxy-3-methylbut-2-enyl diphosphate pocket. Cysteine 196 is a binding site for [4Fe-4S] cluster. Residues serine 224, serine 225, asparagine 226, and serine 268 each contribute to the (2E)-4-hydroxy-3-methylbut-2-enyl diphosphate site. Residues serine 224, serine 225, asparagine 226, and serine 268 each contribute to the dimethylallyl diphosphate site. 4 residues coordinate isopentenyl diphosphate: serine 224, serine 225, asparagine 226, and serine 268.

Belongs to the IspH family. The cofactor is [4Fe-4S] cluster.

The enzyme catalyses isopentenyl diphosphate + 2 oxidized [2Fe-2S]-[ferredoxin] + H2O = (2E)-4-hydroxy-3-methylbut-2-enyl diphosphate + 2 reduced [2Fe-2S]-[ferredoxin] + 2 H(+). The catalysed reaction is dimethylallyl diphosphate + 2 oxidized [2Fe-2S]-[ferredoxin] + H2O = (2E)-4-hydroxy-3-methylbut-2-enyl diphosphate + 2 reduced [2Fe-2S]-[ferredoxin] + 2 H(+). Its pathway is isoprenoid biosynthesis; dimethylallyl diphosphate biosynthesis; dimethylallyl diphosphate from (2E)-4-hydroxy-3-methylbutenyl diphosphate: step 1/1. It functions in the pathway isoprenoid biosynthesis; isopentenyl diphosphate biosynthesis via DXP pathway; isopentenyl diphosphate from 1-deoxy-D-xylulose 5-phosphate: step 6/6. Functionally, catalyzes the conversion of 1-hydroxy-2-methyl-2-(E)-butenyl 4-diphosphate (HMBPP) into a mixture of isopentenyl diphosphate (IPP) and dimethylallyl diphosphate (DMAPP). Acts in the terminal step of the DOXP/MEP pathway for isoprenoid precursor biosynthesis. In Chromobacterium violaceum (strain ATCC 12472 / DSM 30191 / JCM 1249 / CCUG 213 / NBRC 12614 / NCIMB 9131 / NCTC 9757 / MK), this protein is 4-hydroxy-3-methylbut-2-enyl diphosphate reductase.